A 146-amino-acid chain; its full sequence is Small ribosomal subunit protein eS17 (146 aa).

Belongs to the eukaryotic ribosomal protein eS17 family. In terms of assembly, component of the small ribosomal subunit (SSU). Mature N.crassa ribosomes consist of a small (40S) and a large (60S) subunit. The 40S small subunit contains 1 molecule of ribosomal RNA (18S rRNA) and at least 32 different proteins. The large 60S subunit contains 3 rRNA molecules (26S, 5.8S and 5S rRNA) and at least 42 different proteins.

The protein localises to the cytoplasm. Functionally, component of the ribosome, a large ribonucleoprotein complex responsible for the synthesis of proteins in the cell. The small ribosomal subunit (SSU) binds messenger RNAs (mRNAs) and translates the encoded message by selecting cognate aminoacyl-transfer RNA (tRNA) molecules. The large subunit (LSU) contains the ribosomal catalytic site termed the peptidyl transferase center (PTC), which catalyzes the formation of peptide bonds, thereby polymerizing the amino acids delivered by tRNAs into a polypeptide chain. The nascent polypeptides leave the ribosome through a tunnel in the LSU and interact with protein factors that function in enzymatic processing, targeting, and the membrane insertion of nascent chains at the exit of the ribosomal tunnel. In Neurospora crassa (strain ATCC 24698 / 74-OR23-1A / CBS 708.71 / DSM 1257 / FGSC 987), this protein is Small ribosomal subunit protein eS17 (rps-17).